Reading from the N-terminus, the 1176-residue chain is Carbamoyl phosphate synthase arginine-specific large chain (1176 aa).

Residues 1–11 (MLRSISIASRA) constitute a mitochondrion transit peptide. Residues 70-465 (SRSPDVKKVL…SLQKAIRQVD (396 aa)) form a carboxyphosphate synthetic domain region. Arg197, Arg237, Gly243, Gly244, Lys273, Leu275, Glu280, Gly306, Thr307, His308, Gln348, and Glu362 together coordinate ATP. The ATP-grasp 1 domain maps to 201–391 (VQALNEIDIP…LAYTAAKIAL (191 aa)). The Mg(2+) site is built by Gln348, Glu362, and Asn364. Gln348, Glu362, and Asn364 together coordinate Mn(2+). Positions 466-610 (PNFAGFEAYW…YTSYNATTHD (145 aa)) are oligomerization domain. Residues 611–997 (VKFDNGTMVL…AYWAALLSVN (387 aa)) form a carbamoyl phosphate synthetic domain region. One can recognise an ATP-grasp 2 domain in the interval 734–931 (SSILDSIGVD…FIDTASAAIM (198 aa)). The ATP site is built by Arg770, Gln809, Ile811, Glu816, Gly841, Val842, His843, Ser844, Gln884, and Glu902. Residues Gln884, Glu902, and Asn904 each coordinate Mg(2+). Mn(2+) is bound by residues Gln884, Glu902, and Asn904. Positions 998-1137 (GMKLPKANSG…NPIPYSEGFK (140 aa)) are allosteric domain. Residues 999–1154 (MKLPKANSGI…RDFVGEAATT (156 aa)) enclose the MGS-like domain.

The protein belongs to the CarB family. Heterodimer composed of 2 chains; the small (or glutamine) chain promotes the hydrolysis of glutamine to ammonia, which is used by the large (or ammonia) chain to synthesize carbamoyl phosphate. It depends on Mg(2+) as a cofactor. Requires Mn(2+) as cofactor.

The protein localises to the mitochondrion. It carries out the reaction hydrogencarbonate + L-glutamine + 2 ATP + H2O = carbamoyl phosphate + L-glutamate + 2 ADP + phosphate + 2 H(+). The enzyme catalyses hydrogencarbonate + NH4(+) + 2 ATP = carbamoyl phosphate + 2 ADP + phosphate + 2 H(+). It functions in the pathway amino-acid biosynthesis; L-arginine biosynthesis; carbamoyl phosphate from bicarbonate: step 1/1. In terms of biological role, large subunit of the arginine-specific carbamoyl phosphate synthase (CPSase). CPSase catalyzes the formation of carbamoyl phosphate from the ammonia moiety of glutamine, hydrogencarbonate, and phosphate donated by ATP, constituting the first step of 2 biosynthetic pathways, one leading to arginine and/or urea and the other to pyrimidine nucleotides. The large subunit (synthetase) binds the substrates ammonia (free or transferred from glutamine from the small subunit), hydrogencarbonate and ATP and carries out an ATP-coupled ligase reaction, activating hydrogencarbonate by forming carboxy phosphate which reacts with ammonia to form carbamoyl phosphate. The polypeptide is Carbamoyl phosphate synthase arginine-specific large chain (argA) (Cutaneotrichosporon cutaneum (Yeast)).